We begin with the raw amino-acid sequence, 346 residues long: Uroporphyrinogen decarboxylase (346 aa).

Residues 23–27, aspartate 73, tyrosine 151, serine 206, and histidine 321 each bind substrate; that span reads RQAGR.

Belongs to the uroporphyrinogen decarboxylase family. In terms of assembly, homodimer.

It localises to the cytoplasm. It catalyses the reaction uroporphyrinogen III + 4 H(+) = coproporphyrinogen III + 4 CO2. It participates in porphyrin-containing compound metabolism; protoporphyrin-IX biosynthesis; coproporphyrinogen-III from 5-aminolevulinate: step 4/4. Functionally, catalyzes the decarboxylation of four acetate groups of uroporphyrinogen-III to yield coproporphyrinogen-III. The chain is Uroporphyrinogen decarboxylase from Sulfurovum sp. (strain NBC37-1).